Reading from the N-terminus, the 714-residue chain is Fatty acid oxidation complex subunit alpha (714 aa).

Residues 1 to 190 (MEMTSAFTLN…KLGLVDDVVP (190 aa)) are enoyl-CoA hydratase. The 3-hydroxyacyl-CoA dehydrogenase stretch occupies residues 306–714 (APLNSVGILG…FWKTTATDLQ (409 aa)).

This sequence in the N-terminal section; belongs to the enoyl-CoA hydratase/isomerase family. The protein in the central section; belongs to the 3-hydroxyacyl-CoA dehydrogenase family. In terms of assembly, heterotetramer of two alpha chains (FadJ) and two beta chains (FadI).

Its subcellular location is the cytoplasm. The catalysed reaction is a (3S)-3-hydroxyacyl-CoA = a (2E)-enoyl-CoA + H2O. The enzyme catalyses a 4-saturated-(3S)-3-hydroxyacyl-CoA = a (3E)-enoyl-CoA + H2O. It catalyses the reaction a (3S)-3-hydroxyacyl-CoA + NAD(+) = a 3-oxoacyl-CoA + NADH + H(+). It carries out the reaction (3S)-3-hydroxybutanoyl-CoA = (3R)-3-hydroxybutanoyl-CoA. It participates in lipid metabolism; fatty acid beta-oxidation. Catalyzes the formation of a hydroxyacyl-CoA by addition of water on enoyl-CoA. Also exhibits 3-hydroxyacyl-CoA epimerase and 3-hydroxyacyl-CoA dehydrogenase activities. This chain is Fatty acid oxidation complex subunit alpha, found in Escherichia coli O8 (strain IAI1).